The following is a 427-amino-acid chain: Transcription termination factor Rho (427 aa).

The Rho RNA-BD domain occupies 55 to 130 (YFFGEGVLEI…IKIEAINYRP (76 aa)). ATP-binding positions include 173-178 (GKGQRG), 185-190 (KAGKTT), and arginine 216.

Belongs to the Rho family. In terms of assembly, homohexamer. The homohexamer assembles into an open ring structure.

Facilitates transcription termination by a mechanism that involves Rho binding to the nascent RNA, activation of Rho's RNA-dependent ATPase activity, and release of the mRNA from the DNA template. The sequence is that of Transcription termination factor Rho from Thermotoga maritima (strain ATCC 43589 / DSM 3109 / JCM 10099 / NBRC 100826 / MSB8).